Consider the following 154-residue polypeptide: 6,7-dimethyl-8-ribityllumazine synthase (154 aa).

5-amino-6-(D-ribitylamino)uracil-binding positions include Phe-22, 56-58, and 80-82; these read AFE and TVI. (2S)-2-hydroxy-3-oxobutyl phosphate is bound at residue 85 to 86; it reads AT. Residue His-88 is the Proton donor of the active site. Phe-113 contributes to the 5-amino-6-(D-ribitylamino)uracil binding site. Residue Arg-127 coordinates (2S)-2-hydroxy-3-oxobutyl phosphate.

It belongs to the DMRL synthase family. Forms an icosahedral capsid composed of 60 subunits, arranged as a dodecamer of pentamers.

It carries out the reaction (2S)-2-hydroxy-3-oxobutyl phosphate + 5-amino-6-(D-ribitylamino)uracil = 6,7-dimethyl-8-(1-D-ribityl)lumazine + phosphate + 2 H2O + H(+). It functions in the pathway cofactor biosynthesis; riboflavin biosynthesis; riboflavin from 2-hydroxy-3-oxobutyl phosphate and 5-amino-6-(D-ribitylamino)uracil: step 1/2. Catalyzes the formation of 6,7-dimethyl-8-ribityllumazine by condensation of 5-amino-6-(D-ribitylamino)uracil with 3,4-dihydroxy-2-butanone 4-phosphate. This is the penultimate step in the biosynthesis of riboflavin. In Bacillus licheniformis (strain ATCC 14580 / DSM 13 / JCM 2505 / CCUG 7422 / NBRC 12200 / NCIMB 9375 / NCTC 10341 / NRRL NRS-1264 / Gibson 46), this protein is 6,7-dimethyl-8-ribityllumazine synthase.